Reading from the N-terminus, the 415-residue chain is N-succinylarginine dihydrolase (415 aa).

Substrate-binding positions include 18–27 (AGLSRGNIAS), Asn-100, and 127–128 (HR). The active site involves Glu-161. Residue Arg-193 participates in substrate binding. His-229 is an active-site residue. Asp-231 and Asn-340 together coordinate substrate. The active-site Nucleophile is Cys-346.

It belongs to the succinylarginine dihydrolase family. As to quaternary structure, homodimer.

It carries out the reaction N(2)-succinyl-L-arginine + 2 H2O + 2 H(+) = N(2)-succinyl-L-ornithine + 2 NH4(+) + CO2. It functions in the pathway amino-acid degradation; L-arginine degradation via AST pathway; L-glutamate and succinate from L-arginine: step 2/5. Functionally, catalyzes the hydrolysis of N(2)-succinylarginine into N(2)-succinylornithine, ammonia and CO(2). The polypeptide is N-succinylarginine dihydrolase (Sphingopyxis alaskensis (strain DSM 13593 / LMG 18877 / RB2256) (Sphingomonas alaskensis)).